The primary structure comprises 311 residues: DNA replication terminus site-binding protein (311 aa).

Belongs to the Tus family.

Its subcellular location is the cytoplasm. Its function is as follows. Trans-acting protein required for termination of DNA replication. Binds to DNA replication terminator sequences (terA to terF) to prevent the passage of replication forks. The termination efficiency will be affected by the affinity of this protein for the terminator sequence. The sequence is that of DNA replication terminus site-binding protein from Yersinia pseudotuberculosis serotype I (strain IP32953).